The following is a 156-amino-acid chain: Small ribosomal subunit protein uS7 (156 aa).

It belongs to the universal ribosomal protein uS7 family. As to quaternary structure, part of the 30S ribosomal subunit. Contacts proteins S9 and S11.

Functionally, one of the primary rRNA binding proteins, it binds directly to 16S rRNA where it nucleates assembly of the head domain of the 30S subunit. Is located at the subunit interface close to the decoding center, probably blocks exit of the E-site tRNA. The chain is Small ribosomal subunit protein uS7 from Dichelobacter nodosus (strain VCS1703A).